The primary structure comprises 154 residues: Large ribosomal subunit protein uL13 (154 aa).

It belongs to the universal ribosomal protein uL13 family. As to quaternary structure, part of the 50S ribosomal subunit.

In terms of biological role, this protein is one of the early assembly proteins of the 50S ribosomal subunit, although it is not seen to bind rRNA by itself. It is important during the early stages of 50S assembly. This chain is Large ribosomal subunit protein uL13, found in Agrobacterium fabrum (strain C58 / ATCC 33970) (Agrobacterium tumefaciens (strain C58)).